The sequence spans 323 residues: Rhazimal reductase 2 (323 aa).

Asp-53 is an NADP(+) binding site. Catalysis depends on Tyr-58, which acts as the Proton donor. NADP(+) is bound by residues 167-168 (SN), Gln-189, 215-220 (WSPLLS), and 289-297 (DQIQQIPQR).

It belongs to the aldo/keto reductase family. Monomer.

It carries out the reaction rhazimol + NADP(+) = rhazimal + NADPH + 2 H(+). The protein operates within alkaloid biosynthesis. Functionally, oxidoreductase involved in the biosynthesis of akuammilan monoterpene indole alkaloids (MIAs) natural products, components with various biological properties such as antidiabetic, antibacterial, anti-inflammatory, anticancer, and antimalarial activities. Catalyzes the conversion of rhazimal to rhazimol. This chain is Rhazimal reductase 2, found in Alstonia scholaris (Dogbane).